A 433-amino-acid chain; its full sequence is uncharacterized protein (433 aa).

The 59-residue stretch at M1–E59 folds into the TRAM domain. Positions 72, 80, 83, and 168 each coordinate [4Fe-4S] cluster. The S-adenosyl-L-methionine site is built by Q262, Y291, E315, and D359. Residue C386 is the Nucleophile of the active site.

The protein belongs to the class I-like SAM-binding methyltransferase superfamily. RNA M5U methyltransferase family.

This is an uncharacterized protein from Streptomyces avermitilis (strain ATCC 31267 / DSM 46492 / JCM 5070 / NBRC 14893 / NCIMB 12804 / NRRL 8165 / MA-4680).